A 215-amino-acid chain; its full sequence is Ribosomal RNA small subunit methyltransferase G (215 aa).

S-adenosyl-L-methionine contacts are provided by residues glycine 78, leucine 83, 128–129, and arginine 146; that span reads AE.

Belongs to the methyltransferase superfamily. RNA methyltransferase RsmG family.

It localises to the cytoplasm. It carries out the reaction guanosine(527) in 16S rRNA + S-adenosyl-L-methionine = N(7)-methylguanosine(527) in 16S rRNA + S-adenosyl-L-homocysteine. In terms of biological role, specifically methylates the N7 position of guanine in position 527 of 16S rRNA. The sequence is that of Ribosomal RNA small subunit methyltransferase G from Anaeromyxobacter sp. (strain Fw109-5).